The sequence spans 216 residues: MOB kinase activator-like 1 homolog B (216 aa).

Residues cysteine 79, cysteine 84, histidine 161, and histidine 166 each contribute to the Zn(2+) site.

Belongs to the MOB1/phocein family.

The chain is MOB kinase activator-like 1 homolog B (mobB) from Dictyostelium discoideum (Social amoeba).